A 930-amino-acid chain; its full sequence is Inter-alpha-trypsin inhibitor heavy chain H4 (930 aa).

An N-terminal signal peptide occupies residues 1-28 (MKPPRPVRTCSKVLVLLSLLAIHQTTTA). A VIT domain is found at 29–148 (EKNGIDIYSL…KITFELVYEE (120 aa)). Asn-81 and Asn-207 each carry an N-linked (GlcNAc...) asparagine glycan. Residues 272–432 (PKNVVFVIDK…YAFLEKLALD (161 aa)) enclose the VWFA domain. Asn-274 carries N-linked (GlcNAc...) asparagine; atypical glycosylation. N-linked (GlcNAc...) asparagine glycosylation is found at Asn-517 and Asn-577. The interval 595 to 618 (KPDDQEQSQVAEKPMEGESRNRNV) is disordered. Residues 658–688 (MNFRPGVLSSRQLGLPGPPDVPDHAAYHPFR) form a proline-rich (PRR) potential bioactive peptide region. Positions 662–688 (PGVLSSRQLGLPGPPDVPDHAAYHPFR) are cleaved as a propeptide — potentially active peptide. Residues Thr-719, Thr-720, and Thr-722 are each glycosylated (O-linked (GalNAc...) threonine). The segment at 719–725 (TTMTTQT) is O-glycosylated at three sites. Cysteines 747 and 925 form a disulfide.

It belongs to the ITIH family. As to quaternary structure, interacts (via C-terminus) with DNAJC1 (via SANT 2 domain); this interaction protects ITIH4 against cleavage by kallikrein in vitro. Cleaved by plasma kallikrein to yield 100 kDa and 35 kDa fragments, and the resulting 100 kDa fragment is further converted to a 70 kDa fragment. Post-translationally, N- and O-glycosylated. In urine, O-linked glycosylation on threonine residues in the region from Thr-719 to Thr-725 consists of core 1 or possibly core 8 glycans. Mainly Hex(HexNAc)(2), but also some Hex(3)(HexNAc)(3). N-glycosylated but not O-glycosylated in plasma. In terms of tissue distribution, liver specific.

Its subcellular location is the secreted. Functionally, type II acute-phase protein (APP) involved in inflammatory responses to trauma. May also play a role in liver development or regeneration. The protein is Inter-alpha-trypsin inhibitor heavy chain H4 (ITIH4) of Homo sapiens (Human).